The following is a 166-amino-acid chain: Urease accessory protein UreE 2 (166 aa).

A disordered region spans residues 135-154; it reads EHGAYGGGHHHSRAGEEDFN.

Belongs to the UreE family.

It is found in the cytoplasm. In terms of biological role, involved in urease metallocenter assembly. Binds nickel. Probably functions as a nickel donor during metallocenter assembly. This chain is Urease accessory protein UreE 2, found in Pseudomonas syringae pv. syringae (strain B728a).